A 303-amino-acid chain; its full sequence is Nucleotide-binding protein USA300HOU_0794 (303 aa).

18–25 lines the ATP pocket; it reads GLSGAGKS. Residue 69–72 participates in GTP binding; sequence DLRG.

This sequence belongs to the RapZ-like family.

Its function is as follows. Displays ATPase and GTPase activities. In Staphylococcus aureus (strain USA300 / TCH1516), this protein is Nucleotide-binding protein USA300HOU_0794.